The sequence spans 352 residues: RING finger protein 39 (352 aa).

The RING-type zinc finger occupies 20 to 67; it reads CPLCGGPFEDPVLLACEHSFCRSCLARCWGSPAAPGSEEATPSCPCCG. The segment at 98–118 is disordered; sequence PGARTGRRRGGRIPTMGCLDP. In terms of domain architecture, B30.2/SPRY spans 142–352; the sequence is EDLPEDYPVV…APLRIVPGEA (211 aa).

Expressed in the hippocampus. Expression is rapidly up-regulated in granule cells of the dentate gyrus after LTP induction.

Its subcellular location is the cytoplasm. The enzyme catalyses S-ubiquitinyl-[E2 ubiquitin-conjugating enzyme]-L-cysteine + [acceptor protein]-L-lysine = [E2 ubiquitin-conjugating enzyme]-L-cysteine + N(6)-ubiquitinyl-[acceptor protein]-L-lysine.. It functions in the pathway protein modification; protein ubiquitination. Its function is as follows. Plays an inhibitory role in anti-RNA viral innate immunity by targeting the adapter DDX3X and promoting its 'Lys-48'-linked polyubiquitination. Alternatively, enhances the cGAS-STING pathway activation by promoting 'Lys-63'-linked ubiquitination of STING1, facilitating the STING1-TBK1 complex formation and STING1 activation. The sequence is that of RING finger protein 39 (Rnf39) from Rattus norvegicus (Rat).